The primary structure comprises 473 residues: Bifunctional protein GlmU (473 aa).

Positions 1 to 226 (MRAPVAVVIL…AGEASGINDL (226 aa)) are pyrophosphorylase. UDP-N-acetyl-alpha-D-glucosamine-binding positions include 10–13 (LAAG), K24, Q75, 80–81 (GT), 102–104 (YGD), G136, E151, N166, and N224. D104 provides a ligand contact to Mg(2+). N224 lines the Mg(2+) pocket. The segment at 227–247 (VQLAEVEEAFQRRWARRLLQG) is linker. Positions 248-473 (GLRLVAPHRF…TPASGGAKEE (226 aa)) are N-acetyltransferase. 2 residues coordinate UDP-N-acetyl-alpha-D-glucosamine: R330 and K348. H360 serves as the catalytic Proton acceptor. UDP-N-acetyl-alpha-D-glucosamine-binding residues include Y363 and N374. Acetyl-CoA is bound by residues A377, 383–384 (NY), S402, A420, and R437. The tract at residues 439–473 (RARTIPGWQHPGLTGRRGPPDDNDATPASGGAKEE) is disordered.

This sequence in the N-terminal section; belongs to the N-acetylglucosamine-1-phosphate uridyltransferase family. The protein in the C-terminal section; belongs to the transferase hexapeptide repeat family. As to quaternary structure, homotrimer. Mg(2+) is required as a cofactor.

Its subcellular location is the cytoplasm. It catalyses the reaction alpha-D-glucosamine 1-phosphate + acetyl-CoA = N-acetyl-alpha-D-glucosamine 1-phosphate + CoA + H(+). The enzyme catalyses N-acetyl-alpha-D-glucosamine 1-phosphate + UTP + H(+) = UDP-N-acetyl-alpha-D-glucosamine + diphosphate. It participates in nucleotide-sugar biosynthesis; UDP-N-acetyl-alpha-D-glucosamine biosynthesis; N-acetyl-alpha-D-glucosamine 1-phosphate from alpha-D-glucosamine 6-phosphate (route II): step 2/2. It functions in the pathway nucleotide-sugar biosynthesis; UDP-N-acetyl-alpha-D-glucosamine biosynthesis; UDP-N-acetyl-alpha-D-glucosamine from N-acetyl-alpha-D-glucosamine 1-phosphate: step 1/1. Its pathway is bacterial outer membrane biogenesis; LPS lipid A biosynthesis. In terms of biological role, catalyzes the last two sequential reactions in the de novo biosynthetic pathway for UDP-N-acetylglucosamine (UDP-GlcNAc). The C-terminal domain catalyzes the transfer of acetyl group from acetyl coenzyme A to glucosamine-1-phosphate (GlcN-1-P) to produce N-acetylglucosamine-1-phosphate (GlcNAc-1-P), which is converted into UDP-GlcNAc by the transfer of uridine 5-monophosphate (from uridine 5-triphosphate), a reaction catalyzed by the N-terminal domain. This chain is Bifunctional protein GlmU, found in Halorhodospira halophila (strain DSM 244 / SL1) (Ectothiorhodospira halophila (strain DSM 244 / SL1)).